A 298-amino-acid chain; its full sequence is Oxygen-dependent coproporphyrinogen-III oxidase (298 aa).

Ser92 contributes to the substrate binding site. Residues His96 and His106 each coordinate a divalent metal cation. The active-site Proton donor is the His106. 108–110 (NVR) contacts substrate. A divalent metal cation contacts are provided by His145 and His175. Residues 239-274 (YVEFNLVYDRGTLFGLQSGGRSESILMSLPPRVRWE) form an important for dimerization region. 257 to 259 (GGR) is a binding site for substrate.

The protein belongs to the aerobic coproporphyrinogen-III oxidase family. Homodimer. A divalent metal cation serves as cofactor.

The protein localises to the cytoplasm. It carries out the reaction coproporphyrinogen III + O2 + 2 H(+) = protoporphyrinogen IX + 2 CO2 + 2 H2O. The protein operates within porphyrin-containing compound metabolism; protoporphyrin-IX biosynthesis; protoporphyrinogen-IX from coproporphyrinogen-III (O2 route): step 1/1. Its function is as follows. Involved in the heme biosynthesis. Catalyzes the aerobic oxidative decarboxylation of propionate groups of rings A and B of coproporphyrinogen-III to yield the vinyl groups in protoporphyrinogen-IX. The sequence is that of Oxygen-dependent coproporphyrinogen-III oxidase from Stenotrophomonas maltophilia (strain K279a).